A 299-amino-acid polypeptide reads, in one-letter code: Glycine--tRNA ligase alpha subunit (299 aa).

The protein belongs to the class-II aminoacyl-tRNA synthetase family. Tetramer of two alpha and two beta subunits.

Its subcellular location is the cytoplasm. It carries out the reaction tRNA(Gly) + glycine + ATP = glycyl-tRNA(Gly) + AMP + diphosphate. The sequence is that of Glycine--tRNA ligase alpha subunit from Caulobacter vibrioides (strain ATCC 19089 / CIP 103742 / CB 15) (Caulobacter crescentus).